The sequence spans 325 residues: MATH domain and coiled-coil domain-containing protein At3g58430 (325 aa).

Residues 6–131 (HKKFCWIIKN…KGDFKIIAEV (126 aa)) form the MATH domain. A coiled-coil region spans residues 258 to 306 (FKVDWLEKKLDQVKDKKEREQSGLARLHELEEYLLKLKQKCSNLDLLVE).

This Arabidopsis thaliana (Mouse-ear cress) protein is MATH domain and coiled-coil domain-containing protein At3g58430.